Consider the following 426-residue polypeptide: Histidine--tRNA ligase (426 aa).

The protein belongs to the class-II aminoacyl-tRNA synthetase family. Homodimer.

Its subcellular location is the cytoplasm. The catalysed reaction is tRNA(His) + L-histidine + ATP = L-histidyl-tRNA(His) + AMP + diphosphate + H(+). The polypeptide is Histidine--tRNA ligase (Malacoplasma penetrans (strain HF-2) (Mycoplasma penetrans)).